We begin with the raw amino-acid sequence, 320 residues long: Acetyl-coenzyme A carboxylase carboxyl transferase subunit alpha (320 aa).

The region spanning 42–295 (IEEKAVQALN…GDAIAAAFAE (254 aa)) is the CoA carboxyltransferase C-terminal domain.

The protein belongs to the AccA family. Acetyl-CoA carboxylase is a heterohexamer composed of biotin carboxyl carrier protein (AccB), biotin carboxylase (AccC) and two subunits each of ACCase subunit alpha (AccA) and ACCase subunit beta (AccD).

It localises to the cytoplasm. The catalysed reaction is N(6)-carboxybiotinyl-L-lysyl-[protein] + acetyl-CoA = N(6)-biotinyl-L-lysyl-[protein] + malonyl-CoA. The protein operates within lipid metabolism; malonyl-CoA biosynthesis; malonyl-CoA from acetyl-CoA: step 1/1. In terms of biological role, component of the acetyl coenzyme A carboxylase (ACC) complex. First, biotin carboxylase catalyzes the carboxylation of biotin on its carrier protein (BCCP) and then the CO(2) group is transferred by the carboxyltransferase to acetyl-CoA to form malonyl-CoA. The protein is Acetyl-coenzyme A carboxylase carboxyl transferase subunit alpha of Rhodopseudomonas palustris (strain HaA2).